The sequence spans 420 residues: Sodium/proton antiporter 2 (420 aa).

11 helical membrane passes run 25 to 45 (IALL…SVEI), 60 to 80 (IVFY…HQGF), 94 to 114 (ILLW…DNLT), 136 to 156 (LGAV…IGDV), 173 to 193 (IKNL…LMSL), 221 to 241 (LVFG…SLTG), 242 to 262 (LPPY…TDVI), 285 to 305 (GALF…AGIL), 321 to 341 (LIAS…LVAA), 363 to 383 (FCAG…VIFM), and 400 to 420 (FAFA…NFPL).

This sequence belongs to the NhaD Na(+)/H(+) (TC 2.A.62) antiporter family.

The protein resides in the membrane. Na(+)/H(+) antiporter that extrudes sodium in exchange for external protons. The polypeptide is Sodium/proton antiporter 2 (Arabidopsis thaliana (Mouse-ear cress)).